The primary structure comprises 804 residues: uncharacterized protein (804 aa).

Transmembrane regions (helical) follow at residues 15 to 35 (LLIV…LGNI), 243 to 263 (FLLL…AVAM), 301 to 321 (LSAV…MVLL), 333 to 353 (SLWP…LVGL), 381 to 401 (FYLP…MGGS), 403 to 423 (LLWA…VLGW), 453 to 473 (TLSQ…LLVL), 680 to 700 (ALEV…LAQV), 734 to 754 (MLGF…LAVL), and 769 to 789 (LWIV…GWLG).

It belongs to the ABC-4 integral membrane protein family.

It localises to the cell membrane. This is an uncharacterized protein from Escherichia coli (strain K12).